We begin with the raw amino-acid sequence, 647 residues long: Threonine--tRNA ligase (647 aa).

Residues 1 to 61 form the TGS domain; the sequence is MIKITFPDGA…EEDGSIEIVT (61 aa). The tract at residues 240–538 is catalytic; the sequence is DHRKLGKELD…LIETYKGAFP (299 aa). Residues cysteine 334, histidine 385, and histidine 515 each coordinate Zn(2+).

This sequence belongs to the class-II aminoacyl-tRNA synthetase family. As to quaternary structure, homodimer. Requires Zn(2+) as cofactor.

Its subcellular location is the cytoplasm. The catalysed reaction is tRNA(Thr) + L-threonine + ATP = L-threonyl-tRNA(Thr) + AMP + diphosphate + H(+). Its function is as follows. Catalyzes the attachment of threonine to tRNA(Thr) in a two-step reaction: L-threonine is first activated by ATP to form Thr-AMP and then transferred to the acceptor end of tRNA(Thr). Also edits incorrectly charged L-seryl-tRNA(Thr). This is Threonine--tRNA ligase from Streptococcus pyogenes serotype M1.